We begin with the raw amino-acid sequence, 199 residues long: Ribosome maturation factor RimP (199 aa).

The segment at 165–199 (AGNLPPQPEDDEDMLADFEIDESEDEEDPETGDVQ) is disordered. Over residues 172–199 (PEDDEDMLADFEIDESEDEEDPETGDVQ) the composition is skewed to acidic residues.

Belongs to the RimP family.

Its subcellular location is the cytoplasm. In terms of biological role, required for maturation of 30S ribosomal subunits. The protein is Ribosome maturation factor RimP of Hyphomonas neptunium (strain ATCC 15444).